Reading from the N-terminus, the 219-residue chain is Orotate phosphoribosyltransferase (219 aa).

Position 26 (Lys26) interacts with 5-phospho-alpha-D-ribose 1-diphosphate. 34-35 is an orotate binding site; sequence FF. 5-phospho-alpha-D-ribose 1-diphosphate is bound by residues 72-73, Arg98, Lys99, Lys102, His104, and 124-132; these read YK and DDVITAGTA. 2 residues coordinate orotate: Thr128 and Arg156.

It belongs to the purine/pyrimidine phosphoribosyltransferase family. PyrE subfamily. Homodimer. Mg(2+) is required as a cofactor.

The enzyme catalyses orotidine 5'-phosphate + diphosphate = orotate + 5-phospho-alpha-D-ribose 1-diphosphate. It participates in pyrimidine metabolism; UMP biosynthesis via de novo pathway; UMP from orotate: step 1/2. In terms of biological role, catalyzes the transfer of a ribosyl phosphate group from 5-phosphoribose 1-diphosphate to orotate, leading to the formation of orotidine monophosphate (OMP). The chain is Orotate phosphoribosyltransferase from Xanthomonas euvesicatoria pv. vesicatoria (strain 85-10) (Xanthomonas campestris pv. vesicatoria).